The sequence spans 324 residues: Phospho-N-acetylmuramoyl-pentapeptide-transferase (324 aa).

Helical transmembrane passes span 13–33 (VLSA…IFIP), 59–79 (PTMG…IIGY), 85–105 (GMVV…DDIL), 121–141 (MILL…NIGT), 143–163 (IIIP…PLVV), 179–199 (IDGL…IVGF), 201–221 (TGHY…LGFL), 243–263 (AIAT…VGGI), and 303–323 (VKLV…GFIA).

This sequence belongs to the glycosyltransferase 4 family. MraY subfamily. Mg(2+) serves as cofactor.

It localises to the cell membrane. It carries out the reaction UDP-N-acetyl-alpha-D-muramoyl-L-alanyl-gamma-D-glutamyl-meso-2,6-diaminopimeloyl-D-alanyl-D-alanine + di-trans,octa-cis-undecaprenyl phosphate = di-trans,octa-cis-undecaprenyl diphospho-N-acetyl-alpha-D-muramoyl-L-alanyl-D-glutamyl-meso-2,6-diaminopimeloyl-D-alanyl-D-alanine + UMP. It participates in cell wall biogenesis; peptidoglycan biosynthesis. Its function is as follows. Catalyzes the initial step of the lipid cycle reactions in the biosynthesis of the cell wall peptidoglycan: transfers peptidoglycan precursor phospho-MurNAc-pentapeptide from UDP-MurNAc-pentapeptide onto the lipid carrier undecaprenyl phosphate, yielding undecaprenyl-pyrophosphoryl-MurNAc-pentapeptide, known as lipid I. This chain is Phospho-N-acetylmuramoyl-pentapeptide-transferase, found in Clostridium botulinum (strain Alaska E43 / Type E3).